The primary structure comprises 306 residues: Recombination-associated protein RdgC (306 aa).

Belongs to the RdgC family.

It is found in the cytoplasm. The protein resides in the nucleoid. Its function is as follows. May be involved in recombination. This Pseudomonas aeruginosa (strain LESB58) protein is Recombination-associated protein RdgC.